The following is a 55-amino-acid chain: Mitochondrial import receptor subunit TOM7 homolog (55 aa).

Residues 1-20 (MVKLSKEAKQRLQQLFKGGQ) lie on the Cytoplasmic side of the membrane. Residues 21–40 (FAIRWGFIPLVIYLGFTRGA) form a helical membrane-spanning segment. The Mitochondrial intermembrane portion of the chain corresponds to 41-55 (DPGMPEPSVLSLLWG).

It belongs to the Tom7 family. As to quaternary structure, forms part of the preprotein translocase complex of the outer mitochondrial membrane (TOM complex) which consists of at least 7 different proteins (TOMM5, TOMM6, TOMM7, TOMM20, TOMM22, TOMM40 and TOMM70).

Its subcellular location is the mitochondrion outer membrane. Functionally, required for assembly and stability of the TOM complex. Positive regulator of PRKN translocation to damaged mitochondria. Acts probably by stabilizing PINK1 on the outer membrane of depolarized mitochondria. The polypeptide is Mitochondrial import receptor subunit TOM7 homolog (Tomm7) (Mus musculus (Mouse)).